Here is a 402-residue protein sequence, read N- to C-terminus: Choline dehydrogenase (402 aa).

It belongs to the iron-containing alcohol dehydrogenase family.

The catalysed reaction is choline + NAD(+) = betaine aldehyde + NADH + H(+). The protein operates within amine and polyamine biosynthesis; betaine biosynthesis via choline pathway; betaine aldehyde from choline (dehydrogenase route): step 1/1. In terms of biological role, involved in the biosynthesis of the osmoprotectant glycine betaine from choline. The chain is Choline dehydrogenase from Bacillus subtilis (strain 168).